The sequence spans 977 residues: Protein bric-a-brac 1 (977 aa).

The segment at 1–97 (MASAQAETNV…RSSSVASPSS (97 aa)) is disordered. The span at 34–43 (PKSNRSSPTQ) shows a compositional bias: polar residues. The segment covering 44-69 (QEEKRIKSEDRTSPTGGAKDEDKESQ) has biased composition (basic and acidic residues). The span at 80 to 97 (SPVSSPQGRSSSVASPSS) shows a compositional bias: low complexity. Residues 127–192 (VDVTLACDGR…MYRGEINVSQ (66 aa)) form the BTB domain. Disordered regions lie at residues 221–249 (AAAA…HDRE), 281–348 (ERQQ…GSTV), 362–434 (DMPS…RFPL), and 447–497 (SGLG…ADDL). Over residues 316–330 (ERMELEQKERERQRD) the composition is skewed to basic and acidic residues. The segment covering 372-396 (PLSRSSRPHSQSPQQQQAQQQGQLP) has biased composition (low complexity). Residues 469–491 (GGGVGGGGVGGGGAGGVGSGGGS) are compositionally biased toward gly residues. The region spanning 559–611 (FRERGPLKSWRPETMAEAIFSVLKEGLSLSQAARKYDIPYPTFVLYANRVHNM) is the HTH psq-type domain. A DNA-binding region (H-T-H motif) is located at residues 569 to 614 (RPETMAEAIFSVLKEGLSLSQAARKYDIPYPTFVLYANRVHNMLGP). A DNA-binding region (a.T hook) is located at residues 621–632 (DLRPKGRGRPQR). Disordered stretches follow at residues 772 to 900 (ASIS…LGDL) and 925 to 977 (VGAS…TTSE). Low complexity-rich tracts occupy residues 804–816 (MAVA…QQQA), 838–853 (QQQQ…GGHQ), 862–872 (ASSSSSASSSS), and 925–966 (VGAS…SSGG).

In terms of tissue distribution, leg imaginal disk at the central region of the tarsus and in eye antenna disk at the basal cylinder.

It is found in the nucleus. Functionally, probably acts as a transcriptional regulator. Required for the specification of the tarsal segment. Also involved in antenna development. In Drosophila melanogaster (Fruit fly), this protein is Protein bric-a-brac 1 (bab1).